The following is a 72-amino-acid chain: Metallothionein-like protein 1 (72 aa).

It belongs to the metallothionein superfamily. Type 15 family.

Functionally, metallothioneins have a high content of cysteine residues that bind various heavy metals. This Erythranthe guttata (Yellow monkey flower) protein is Metallothionein-like protein 1.